Consider the following 612-residue polypeptide: Zinc metalloproteinase-disintegrin-like 8 (612 aa).

An N-terminal signal peptide occupies residues 1-20 (MIQVLLVTICLAVFPYQGSS). The propeptide occupies 21–189 (IILGSGNVND…KKASQLNLTP (169 aa)). Residues 199-395 (KYIELVIVAD…NRPPCILNKP (197 aa)) form the Peptidase M12B domain. A Ca(2+)-binding site is contributed by Glu-202. Asn-218 carries N-linked (GlcNAc...) asparagine glycosylation. Asp-286 is a binding site for Ca(2+). Intrachain disulfides connect Cys-310–Cys-390, Cys-350–Cys-374, and Cys-352–Cys-357. Residue His-335 participates in Zn(2+) binding. The active site involves Glu-336. Residues His-339 and His-345 each contribute to the Zn(2+) site. Residues Cys-390, Asn-393, Val-405, Asn-408, Phe-410, Glu-412, Glu-415, and Asp-418 each contribute to the Ca(2+) site. Positions 403 to 489 (PPVCGNYFVE…DCPTDDFQRN (87 aa)) constitute a Disintegrin domain. Disulfide bonds link Cys-406–Cys-435, Cys-417–Cys-430, Cys-419–Cys-425, Cys-429–Cys-452, Cys-443–Cys-449, Cys-448–Cys-474, Cys-461–Cys-481, Cys-468–Cys-500, Cys-493–Cys-505, Cys-512–Cys-562, Cys-527–Cys-573, Cys-540–Cys-550, Cys-557–Cys-599, and Cys-593–Cys-605. The short motif at 467–469 (ECD) is the D/ECD-tripeptide element. N-linked (GlcNAc...) asparagine glycosylation occurs at Asn-502.

The protein belongs to the venom metalloproteinase (M12B) family. P-III subfamily. It depends on Zn(2+) as a cofactor. As to expression, expressed by the venom gland.

Its subcellular location is the secreted. In terms of biological role, snake venom metalloproteinase that impairs hemostasis in the envenomed animal. This chain is Zinc metalloproteinase-disintegrin-like 8, found in Crotalus adamanteus (Eastern diamondback rattlesnake).